The primary structure comprises 588 residues: Sulfite reductase [NADPH] hemoprotein beta-component (588 aa).

The [4Fe-4S] cluster site is built by C443, C449, C488, and C492. C492 contacts siroheme.

It belongs to the nitrite and sulfite reductase 4Fe-4S domain family. Alpha(8)-beta(8). The alpha component is a flavoprotein, the beta component is a hemoprotein. The cofactor is siroheme. It depends on [4Fe-4S] cluster as a cofactor.

The catalysed reaction is hydrogen sulfide + 3 NADP(+) + 3 H2O = sulfite + 3 NADPH + 4 H(+). It functions in the pathway sulfur metabolism; hydrogen sulfide biosynthesis; hydrogen sulfide from sulfite (NADPH route): step 1/1. Functionally, component of the sulfite reductase complex that catalyzes the 6-electron reduction of sulfite to sulfide. This is one of several activities required for the biosynthesis of L-cysteine from sulfate. This is Sulfite reductase [NADPH] hemoprotein beta-component from Actinobacillus succinogenes (strain ATCC 55618 / DSM 22257 / CCUG 43843 / 130Z).